Reading from the N-terminus, the 178-residue chain is uncharacterized protein (178 aa).

One can recognise an N-acetyltransferase domain in the interval 9–173; that stretch reads LTLRKMELED…IDVYMFSLLK (165 aa).

This is an uncharacterized protein from Bacillus licheniformis.